We begin with the raw amino-acid sequence, 294 residues long: Glyceraldehyde-3-phosphate dehydrogenase (294 aa).

3 residues coordinate NAD(+): aspartate 19, lysine 63, and threonine 105. D-glyceraldehyde 3-phosphate contacts are provided by residues 134–136 (SCT), threonine 165, 194–195 (TG), and arginine 217. Cysteine 135 (nucleophile) is an active-site residue.

The protein belongs to the glyceraldehyde-3-phosphate dehydrogenase family. Homotetramer.

It is found in the cytoplasm. It carries out the reaction D-glyceraldehyde 3-phosphate + phosphate + NAD(+) = (2R)-3-phospho-glyceroyl phosphate + NADH + H(+). The protein operates within carbohydrate degradation; glycolysis; pyruvate from D-glyceraldehyde 3-phosphate: step 1/5. Its function is as follows. Catalyzes the oxidative phosphorylation of glyceraldehyde 3-phosphate (G3P) to 1,3-bisphosphoglycerate (BPG) using the cofactor NAD. The first reaction step involves the formation of a hemiacetal intermediate between G3P and a cysteine residue, and this hemiacetal intermediate is then oxidized to a thioester, with concomitant reduction of NAD to NADH. The reduced NADH is then exchanged with the second NAD, and the thioester is attacked by a nucleophilic inorganic phosphate to produce BPG. The chain is Glyceraldehyde-3-phosphate dehydrogenase (gap) from Serratia odorifera.